Here is a 269-residue protein sequence, read N- to C-terminus: 4-hydroxy-tetrahydrodipicolinate reductase (269 aa).

NAD(+) is bound by residues 11–16 (GASGRM) and glutamate 37. An NADP(+)-binding site is contributed by arginine 38. Residues 101–103 (GTT) and 125–128 (AGNM) contribute to the NAD(+) site. Residue histidine 158 is the Proton donor/acceptor of the active site. A (S)-2,3,4,5-tetrahydrodipicolinate-binding site is contributed by histidine 159. Lysine 162 (proton donor) is an active-site residue. A (S)-2,3,4,5-tetrahydrodipicolinate-binding site is contributed by 168-169 (GT).

It belongs to the DapB family.

It is found in the cytoplasm. The catalysed reaction is (S)-2,3,4,5-tetrahydrodipicolinate + NAD(+) + H2O = (2S,4S)-4-hydroxy-2,3,4,5-tetrahydrodipicolinate + NADH + H(+). It carries out the reaction (S)-2,3,4,5-tetrahydrodipicolinate + NADP(+) + H2O = (2S,4S)-4-hydroxy-2,3,4,5-tetrahydrodipicolinate + NADPH + H(+). Its pathway is amino-acid biosynthesis; L-lysine biosynthesis via DAP pathway; (S)-tetrahydrodipicolinate from L-aspartate: step 4/4. Functionally, catalyzes the conversion of 4-hydroxy-tetrahydrodipicolinate (HTPA) to tetrahydrodipicolinate. The chain is 4-hydroxy-tetrahydrodipicolinate reductase from Ruegeria sp. (strain TM1040) (Silicibacter sp.).